The sequence spans 734 residues: E3 ubiquitin-protein ligase TRIM56 (734 aa).

Residues 21 to 60 (CKICLEQLHTPKTLPCLHTYCQDCLAQLDIGGQVRCPECR) form an RING-type zinc finger. B box-type zinc fingers lie at residues 98–149 (KPTC…VVDL) and 164–205 (RQAS…CLPL). Zn(2+) contacts are provided by Cys-169, His-172, Cys-192, and His-197. Residues 215–303 (GLEELLAGVD…KIERQEQVAK (89 aa)) adopt a coiled-coil conformation. Basic and acidic residues predominate over residues 372 to 381 (EPKQSPKDSG). The interval 372–463 (EPKQSPKDSG…SPILRPNLEG (92 aa)) is disordered. A compositionally biased stretch (basic residues) spans 435–448 (RPNKKKKCKGRGKS). Ser-454 bears the Phosphoserine mark.

Belongs to the TRIM/RBCC family. In terms of assembly, interacts with STING1. Interacts with TICAM1.

It is found in the cytoplasm. The catalysed reaction is S-ubiquitinyl-[E2 ubiquitin-conjugating enzyme]-L-cysteine + [acceptor protein]-L-lysine = [E2 ubiquitin-conjugating enzyme]-L-cysteine + N(6)-ubiquitinyl-[acceptor protein]-L-lysine.. It participates in protein modification; protein ubiquitination. In terms of biological role, E3 ubiquitin-protein ligase that plays a key role in innate antiviral immunity by mediating ubiquitination of CGAS and STING1. In response to pathogen- and host-derived double-stranded DNA (dsDNA), targets STING1 to 'Lys-63'-linked ubiquitination, thereby promoting its homodimerization, a step required for the production of type I interferon IFN-beta. Also mediates monoubiquitination of CGAS, thereby promoting CGAS oligomerization and subsequent activation. Independently of its E3 ubiquitin ligase activity, positive regulator of TLR3 signaling. Potentiates extracellular double stranded RNA (dsRNA)-induced expression of IFNB1 and interferon-stimulated genes ISG15, IFIT1/ISG56, CXCL10, OASL and CCL5/RANTES. This is E3 ubiquitin-protein ligase TRIM56 from Mus musculus (Mouse).